Reading from the N-terminus, the 1640-residue chain is RING finger protein 17 (1640 aa).

Residues 30–73 (CTRCGRKVSVASGDHHKFPCGHAFCELCLLAPQEYTTSKCTDCE) form an RING-type zinc finger. At Ser134 the chain carries Phosphoserine. The residue at position 229 (Lys229) is an N6-acetyllysine. 2 disordered regions span residues 348–376 (TDET…TKEM) and 413–435 (DDPI…APVG). The span at 360–373 (APDRHLEGKKKQPT) shows a compositional bias: basic and acidic residues. 2 Tudor domains span residues 751–809 (CPLQ…FLEP) and 985–1044 (KWEC…LKTM). Positions 1170–1184 (NEHKVPDSKGKKSES) are enriched in basic and acidic residues. Positions 1170 to 1191 (NEHKVPDSKGKKSESRSTGCYR) are disordered. 2 consecutive Tudor domains span residues 1246–1303 (SWKK…PDTP) and 1496–1556 (DFSS…LMQY).

Interacts with MXD1, MXD3, MXD4, MXI1 and PIWIL1. Self-associates. In terms of tissue distribution, expressed at high levels in adult testis. Expressed in male germ cells (at protein level). Expressed at lower levels in adult thyroid, submaxillary gland, ovary and epididymis.

The protein resides in the cytoplasm. It is found in the nucleus. Its function is as follows. Seems to be involved in regulation of transcriptional activity of MYC. In vitro, inhibits DNA-binding activity of Mad-MAX heterodimers. Can recruit Mad transcriptional repressors (MXD1, MXD3, MXD4 and MXI1) to the cytoplasm. May be involved in spermiogenesis. The protein is RING finger protein 17 (Rnf17) of Mus musculus (Mouse).